Consider the following 196-residue polypeptide: dTTP/UTP pyrophosphatase (196 aa).

Residue D75 is the Proton acceptor of the active site.

Belongs to the Maf family. YhdE subfamily. A divalent metal cation serves as cofactor.

The protein resides in the cytoplasm. The enzyme catalyses dTTP + H2O = dTMP + diphosphate + H(+). It catalyses the reaction UTP + H2O = UMP + diphosphate + H(+). Its function is as follows. Nucleoside triphosphate pyrophosphatase that hydrolyzes dTTP and UTP. May have a dual role in cell division arrest and in preventing the incorporation of modified nucleotides into cellular nucleic acids. The protein is dTTP/UTP pyrophosphatase of Wolbachia pipientis subsp. Culex pipiens (strain wPip).